The following is a 498-amino-acid chain: Cysteine--tRNA ligase (498 aa).

Cys44 contacts Zn(2+). The short motif at 46–56 (PTVYSDAHLGH) is the 'HIGH' region element. Residues Cys235, His260, and Glu264 each coordinate Zn(2+). The 'KMSKS' region motif lies at 291–295 (KMSKS). Residue Lys294 participates in ATP binding.

Belongs to the class-I aminoacyl-tRNA synthetase family. Monomer. Requires Zn(2+) as cofactor.

Its subcellular location is the cytoplasm. It carries out the reaction tRNA(Cys) + L-cysteine + ATP = L-cysteinyl-tRNA(Cys) + AMP + diphosphate. The protein is Cysteine--tRNA ligase (cysS) of Deinococcus radiodurans (strain ATCC 13939 / DSM 20539 / JCM 16871 / CCUG 27074 / LMG 4051 / NBRC 15346 / NCIMB 9279 / VKM B-1422 / R1).